A 187-amino-acid polypeptide reads, in one-letter code: MISSNDFRTGTSIVMDGAVWKVVEFLHVKPGKGSAFVRTKLKSVQTGNVVEKTFRAGETVPQANIEKSVMQHTYKDGDQYVFMDMETFEEVSIAPDTLGDKAKFIKEEMEVSVVTWDGTILDVELPTSVVLEIVETDPGVKGDTATGGTKPAILETGAQVMVPLFIAQGERIKVDTRDGSYLGRDNA.

The protein belongs to the elongation factor P family.

Its subcellular location is the cytoplasm. Its pathway is protein biosynthesis; polypeptide chain elongation. In terms of biological role, involved in peptide bond synthesis. Stimulates efficient translation and peptide-bond synthesis on native or reconstituted 70S ribosomes in vitro. Probably functions indirectly by altering the affinity of the ribosome for aminoacyl-tRNA, thus increasing their reactivity as acceptors for peptidyl transferase. This is Elongation factor P (efp) from Synechocystis sp. (strain ATCC 27184 / PCC 6803 / Kazusa).